The primary structure comprises 651 residues: Chaperone protein dnaK1 (651 aa).

Thr197 carries the phosphothreonine; by autocatalysis modification.

The protein belongs to the heat shock protein 70 family.

Acts as a chaperone. In Thermosynechococcus vestitus (strain NIES-2133 / IAM M-273 / BP-1), this protein is Chaperone protein dnaK1 (dnaK1).